We begin with the raw amino-acid sequence, 124 residues long: Small ribosomal subunit protein uS12 (124 aa).

The residue at position 89 (aspartate 89) is a 3-methylthioaspartic acid.

Belongs to the universal ribosomal protein uS12 family. In terms of assembly, part of the 30S ribosomal subunit. Contacts proteins S8 and S17. May interact with IF1 in the 30S initiation complex.

Its function is as follows. With S4 and S5 plays an important role in translational accuracy. In terms of biological role, interacts with and stabilizes bases of the 16S rRNA that are involved in tRNA selection in the A site and with the mRNA backbone. Located at the interface of the 30S and 50S subunits, it traverses the body of the 30S subunit contacting proteins on the other side and probably holding the rRNA structure together. The combined cluster of proteins S8, S12 and S17 appears to hold together the shoulder and platform of the 30S subunit. In Treponema pallidum subsp. pallidum (strain SS14), this protein is Small ribosomal subunit protein uS12.